A 427-amino-acid polypeptide reads, in one-letter code: Glutamate-1-semialdehyde 2,1-aminomutase (427 aa).

Position 265 is an N6-(pyridoxal phosphate)lysine (lysine 265).

The protein belongs to the class-III pyridoxal-phosphate-dependent aminotransferase family. HemL subfamily. As to quaternary structure, homodimer. It depends on pyridoxal 5'-phosphate as a cofactor.

Its subcellular location is the cytoplasm. The catalysed reaction is (S)-4-amino-5-oxopentanoate = 5-aminolevulinate. Its pathway is porphyrin-containing compound metabolism; protoporphyrin-IX biosynthesis; 5-aminolevulinate from L-glutamyl-tRNA(Glu): step 2/2. This is Glutamate-1-semialdehyde 2,1-aminomutase from Pseudomonas putida (strain ATCC 700007 / DSM 6899 / JCM 31910 / BCRC 17059 / LMG 24140 / F1).